A 174-amino-acid polypeptide reads, in one-letter code: Phosphopantetheine adenylyltransferase (174 aa).

Substrate is bound at residue Thr10. ATP contacts are provided by residues 10-11 (TF) and His18. The substrate site is built by Lys44, Leu76, and Arg90. ATP-binding positions include 91-93 (GLR), Glu101, and 126-132 (HAYISSS).

Belongs to the bacterial CoaD family. In terms of assembly, homohexamer. Mg(2+) serves as cofactor.

It is found in the cytoplasm. It carries out the reaction (R)-4'-phosphopantetheine + ATP + H(+) = 3'-dephospho-CoA + diphosphate. The protein operates within cofactor biosynthesis; coenzyme A biosynthesis; CoA from (R)-pantothenate: step 4/5. Its function is as follows. Reversibly transfers an adenylyl group from ATP to 4'-phosphopantetheine, yielding dephospho-CoA (dPCoA) and pyrophosphate. This chain is Phosphopantetheine adenylyltransferase, found in Alkalilimnicola ehrlichii (strain ATCC BAA-1101 / DSM 17681 / MLHE-1).